Consider the following 106-residue polypeptide: uncharacterized protein (106 aa).

The N-terminal stretch at 1–31 (MNNERLMLKGIFLGAAAGAALSLLHKPTRQA) is a signal peptide. Residues 57–89 (VITKVDEAKKLARTLSKEVDFVNQQVKELKKTT) are a coiled coil.

This is an uncharacterized protein from Bacillus subtilis (strain 168).